Here is a 758-residue protein sequence, read N- to C-terminus: MSELSQMTLKILYTLDNGSNGSYLARSRAPKQVRVANIPSPFPTDSNEQTELRIGAIHLKTILHEIYLNSPEVLDHDTLKDGYDYNLYYRDICEVDEPLVSLGLLSGLRKKFHKNSPYQYTENNIGEEESEERDEVTEEEYEDESFIVTGRVCSNVSALLRRSYSNISNKKGRVVNNQIPEETLEVKLRFTKVITNLRTSGNNTTNSRISCLQMPSSLPSATLPFTPKSQSLFKTNQIKNSRNARTTITINNTNSGTVGRRQTNPMPAPKAVRTQSLPIWNLKPNIANTGFPRNSIAHKIYLADRKTEANQQNNQHQNIAYEINTLQNDNTIQRTKIDDSVSKRFDFMLNKRKSTKKVSPGIATIAKKPASININPKQPPKTSGEKKANDKQTIVKVKNSNSKNSAKSTQAGCRRSSVIEHLNDHDDSILSDILSEPGIEGQKLQQKQKGRKISLTSENDKENIPPQSITSKENKLEGDLDFNAEFPMSDFSDVVFKDEMGWFSNFNCNFFESPTSASASQLNQQNLKPSITLNDPNTCNTIALENEDVSELETAQNNKISLPSDVDKTSPIDSLSIPLIELTHSSSTTNMQRISIKEGSTLNITDSNNATPCDNDIKDRKASVIDSDNTKPQAGLINFSTPADQPASDNNVTASKKLTSMLETQQSKRSHEEVLDEEEEEEALKKQKAIPSSPCGMFNYHQPMELSEDIVEEEQGHNIGDDNESDKTNDLFSTFIHSGIRVSQVVTSPIGEFQSIKH.

4 disordered regions span residues 251–271 (NNTN…APKA), 372–414 (ININ…AGCR), 438–471 (GIEG…SITS), and 624–651 (VIDS…SDNN). Positions 395-408 (VKVKNSNSKNSAKS) are enriched in low complexity. Position 454 is a phosphoserine (S454). Residues 626-651 (DSDNTKPQAGLINFSTPADQPASDNN) are compositionally biased toward polar residues.

Functionally, required for normal transcription at a number of loci in yeast. The sequence is that of Protein SPT21 (SPT21) from Saccharomyces cerevisiae (strain ATCC 204508 / S288c) (Baker's yeast).